A 940-amino-acid chain; its full sequence is BTB/POZ domain-containing protein FBL11 (940 aa).

The BTB domain occupies 41–109; that stretch reads WDMSEILSYG…LYGYDIEITS (69 aa). In terms of domain architecture, BACK spans 155–258; that stretch reads IQIWSFGLEH…FSLLPLWFIA (104 aa).

Its pathway is protein modification; protein ubiquitination. In terms of biological role, may act as a substrate-specific adapter of an E3 ubiquitin-protein ligase complex (CUL3-RBX1-BTB) which mediates the ubiquitination and subsequent proteasomal degradation of target proteins. The chain is BTB/POZ domain-containing protein FBL11 (FBL11) from Arabidopsis thaliana (Mouse-ear cress).